The sequence spans 402 residues: Phosphomevalonate dehydratase large subunit (402 aa).

G48, A49, S50, N79, and P80 together coordinate (R)-5-phosphomevalonate. Position 122 (C122) interacts with [4Fe-4S] cluster. Positions 145 and 146 each coordinate (R)-5-phosphomevalonate. The [4Fe-4S] cluster site is built by C297 and C356. Position 377 (K377) interacts with (R)-5-phosphomevalonate.

It belongs to the AcnX type II large subunit family. Heterodimer composed of a large subunit (PMDh-L) and a small subunit (PMDh-S). Requires [4Fe-4S] cluster as cofactor.

The enzyme catalyses (R)-5-phosphomevalonate = (2E)-3-methyl-5-phosphooxypent-2-enoate + H2O. Its pathway is isoprenoid biosynthesis; isopentenyl diphosphate biosynthesis via mevalonate pathway. Neither the addition of 1 mM Mg(2+) nor 1 mM Mn(2+) has a significant effect on the activity, whereas Zn(2+) causes almost complete inactivation. Strongly inhibited by H(2)O(2), but not by EDTA or iodoacetamide. Component of a hydro-lyase that catalyzes the dehydration of mevalonate 5-phosphate (MVA5P) to form trans-anhydromevalonate 5-phosphate (tAHMP). Involved in the archaeal mevalonate (MVA) pathway, which provides fundamental precursors for isoprenoid biosynthesis, such as isopentenyl diphosphate (IPP) and dimethylallyl diphosphate (DMAPP). In Aeropyrum pernix (strain ATCC 700893 / DSM 11879 / JCM 9820 / NBRC 100138 / K1), this protein is Phosphomevalonate dehydratase large subunit.